The chain runs to 82 residues: MNKALFLCLVVLCAAVVFAAEDLQKAKHAPFKRGAQVCFCPGKVDRGDLWILRGDCPGGYGYTSNCYTWPNICCYPQSFSGR.

A signal peptide spans 1 to 19 (MNKALFLCLVVLCAAVVFA). A propeptide spanning residues 20-31 (AEDLQKAKHAPF) is cleaved from the precursor. 3 disulfide bridges follow: cysteine 38–cysteine 73, cysteine 40–cysteine 66, and cysteine 56–cysteine 74.

This sequence belongs to the sea anemone type 3 (BDS) potassium channel toxin family. As to expression, weakly expressed in the ectodermal tissue from the distal and proximal tentacles, body wall, and oral disk.

The protein resides in the secreted. It localises to the nematocyst. Its function is as follows. Blocks Kv3 voltage-gated potassium channels. Reduces blood pressure. This Anemonia viridis (Snakelocks anemone) protein is Kappa-actitoxin-Avd4j.